The chain runs to 70 residues: Cold shock-like protein CspH (70 aa).

Residues 7–67 (GIVKTFDCKS…GLRGPTAANV (61 aa)) enclose the CSD domain.

The protein resides in the cytoplasm. This chain is Cold shock-like protein CspH (cspH), found in Salmonella typhi.